The following is a 118-amino-acid chain: CLAVATA3/ESR (CLE)-related protein 12 (118 aa).

The N-terminal stretch at 1–35 (MLRISSSSSMALKFSQILFIVLWLSLFFLLLHHLY) is a signal peptide. Composition is skewed to basic and acidic residues over residues 75–91 (TPFH…RSGE) and 98–108 (IDPRYGVEKRR). The interval 75 to 118 (TPFHSRDNSRHNHRSGEQYDGDEIDPRYGVEKRRVPSGPNPLHH) is disordered. Hydroxyproline is present on residues Pro-110 and Pro-113. Residue Pro-113 is glycosylated (O-linked (Ara...) hydroxyproline).

Belongs to the CLV3/ESR signal peptide family. In terms of processing, the O-glycosylation (arabinosylation) of the hydroxyproline Pro-113 enhances binding affinity of the CLE12p peptide for its receptor. In terms of tissue distribution, mostly expressed in seedlings, roots, flowers, stems and apex, and, to a lower extent, in leaves and siliques.

It localises to the secreted. Its subcellular location is the extracellular space. In terms of biological role, extracellular signal peptide that regulates cell fate. Represses root apical meristem maintenance. The polypeptide is CLAVATA3/ESR (CLE)-related protein 12 (Arabidopsis thaliana (Mouse-ear cress)).